A 468-amino-acid polypeptide reads, in one-letter code: 3-isopropylmalate dehydratase large subunit (468 aa).

Positions 346, 406, and 409 each coordinate [4Fe-4S] cluster.

This sequence belongs to the aconitase/IPM isomerase family. LeuC type 1 subfamily. In terms of assembly, heterodimer of LeuC and LeuD. It depends on [4Fe-4S] cluster as a cofactor.

The catalysed reaction is (2R,3S)-3-isopropylmalate = (2S)-2-isopropylmalate. The protein operates within amino-acid biosynthesis; L-leucine biosynthesis; L-leucine from 3-methyl-2-oxobutanoate: step 2/4. Its function is as follows. Catalyzes the isomerization between 2-isopropylmalate and 3-isopropylmalate, via the formation of 2-isopropylmaleate. This chain is 3-isopropylmalate dehydratase large subunit, found in Pseudoalteromonas atlantica (strain T6c / ATCC BAA-1087).